A 795-amino-acid polypeptide reads, in one-letter code: Histidine biosynthesis trifunctional protein (795 aa).

The tract at residues 1–225 (MLPVVPVFNA…VVRQGGSGSF (225 aa)) is phosphoribosyl-AMP cyclohydrolase. The segment at 226–308 (CHLETESCFG…FYFAMARLVA (83 aa)) is phosphoribosyl-ATP pyrophosphohydrolase. Residues 309–795 (NGVSLEDVER…KLGLLPSGFE (487 aa)) form a histidinol dehydrogenase region. Positions 614 and 617 each coordinate Zn(2+). Active-site residues include glutamate 683 and histidine 684. Residues aspartate 717 and histidine 776 each contribute to the Zn(2+) site.

It in the C-terminal section; belongs to the histidinol dehydrogenase family. It depends on Zn(2+) as a cofactor.

The enzyme catalyses 1-(5-phospho-beta-D-ribosyl)-5'-AMP + H2O = 1-(5-phospho-beta-D-ribosyl)-5-[(5-phospho-beta-D-ribosylamino)methylideneamino]imidazole-4-carboxamide. The catalysed reaction is 1-(5-phospho-beta-D-ribosyl)-ATP + H2O = 1-(5-phospho-beta-D-ribosyl)-5'-AMP + diphosphate + H(+). It catalyses the reaction L-histidinol + 2 NAD(+) + H2O = L-histidine + 2 NADH + 3 H(+). It participates in amino-acid biosynthesis; L-histidine biosynthesis; L-histidine from 5-phospho-alpha-D-ribose 1-diphosphate: step 2/9. The protein operates within amino-acid biosynthesis; L-histidine biosynthesis; L-histidine from 5-phospho-alpha-D-ribose 1-diphosphate: step 3/9. It functions in the pathway amino-acid biosynthesis; L-histidine biosynthesis; L-histidine from 5-phospho-alpha-D-ribose 1-diphosphate: step 9/9. The sequence is that of Histidine biosynthesis trifunctional protein (HIS4) from Kluyveromyces lactis (strain ATCC 8585 / CBS 2359 / DSM 70799 / NBRC 1267 / NRRL Y-1140 / WM37) (Yeast).